The following is a 1901-amino-acid chain: Protein TIC 214 (1901 aa).

A run of 6 helical transmembrane segments spans residues 18–38 (IINS…FSIG), 64–84 (FITG…HLAL), 87–107 (PHTI…WNNH), 124–144 (LSIQ…HFIL), 172–192 (VGWL…LVWI), and 221–241 (IFSI…PSPI). Disordered regions lie at residues 248–299 (EASK…EERW), 797–817 (REEQ…ENKR), and 1591–1618 (IQEA…LGPV). Positions 256 to 268 (VESEEERDVEIET) are enriched in acidic residues. Over residues 1591-1611 (IQEAKEPASQGEKERGSDIEN) the composition is skewed to basic and acidic residues.

It belongs to the TIC214 family. As to quaternary structure, part of the Tic complex.

It localises to the plastid. Its subcellular location is the chloroplast inner membrane. Functionally, involved in protein precursor import into chloroplasts. May be part of an intermediate translocation complex acting as a protein-conducting channel at the inner envelope. The polypeptide is Protein TIC 214 (Nicotiana sylvestris (Wood tobacco)).